Consider the following 383-residue polypeptide: Outer membrane protein assembly factor BamB (383 aa).

A signal peptide spans 1-23 (MMLLKRCNRRALVALAAVLLLAA). Residue cysteine 24 is the site of N-palmitoyl cysteine attachment. A lipid anchor (S-diacylglycerol cysteine) is attached at cysteine 24.

It belongs to the BamB family. In terms of assembly, part of the Bam complex.

Its subcellular location is the cell outer membrane. Functionally, part of the outer membrane protein assembly complex, which is involved in assembly and insertion of beta-barrel proteins into the outer membrane. In Alkalilimnicola ehrlichii (strain ATCC BAA-1101 / DSM 17681 / MLHE-1), this protein is Outer membrane protein assembly factor BamB.